The sequence spans 294 residues: MKNNKVLVVVGPTAVGKTALGIDLAIKMNGEIISGDSQQVYQGLDIGTAKVTKAEQALAVHHLIDVRKWTENFSVHDFVMEANRLIEEIIERGNVPIIVGGTGLYIQSLIEGYHLGGQENHQAMMELRETLLALTDEELFEKVLKLNPNFPELNRRRAIRFLELQTFGSTDENSGSDYNFLLIGLNAERKVLYERINQRVEQMMSEGLLSEARSLFEKAPDAQAAKGIGYKEFFPYFSGEISLEDAVELVKRNSRRYAKRQLTWFRNRMEVEFEDVFSETYPDSVFEKVTQFLN.

11 to 18 (GPTAVGKT) provides a ligand contact to ATP. Position 13–18 (13–18 (TAVGKT)) interacts with substrate. The segment at 36–39 (DSQQ) is interaction with substrate tRNA.

It belongs to the IPP transferase family. Monomer. Requires Mg(2+) as cofactor.

The enzyme catalyses adenosine(37) in tRNA + dimethylallyl diphosphate = N(6)-dimethylallyladenosine(37) in tRNA + diphosphate. Functionally, catalyzes the transfer of a dimethylallyl group onto the adenine at position 37 in tRNAs that read codons beginning with uridine, leading to the formation of N6-(dimethylallyl)adenosine (i(6)A). This is tRNA dimethylallyltransferase from Lactococcus lactis subsp. cremoris (strain MG1363).